A 271-amino-acid polypeptide reads, in one-letter code: Short chain dehydrogenase asqE (271 aa).

The NADP(+) site is built by isoleucine 22, aspartate 70, and asparagine 99. Catalysis depends on proton donor residues serine 152 and serine 153. The NADP(+) site is built by tyrosine 167, lysine 171, and threonine 203. The active-site Proton acceptor is tyrosine 167. Lysine 171 functions as the Lowers pKa of active site Tyr in the catalytic mechanism.

It belongs to the short-chain dehydrogenases/reductases (SDR) family.

It carries out the reaction a primary alcohol + NAD(+) = an aldehyde + NADH + H(+). The catalysed reaction is a secondary alcohol + NAD(+) = a ketone + NADH + H(+). The protein operates within secondary metabolite biosynthesis. It participates in alkaloid biosynthesis. It functions in the pathway mycotoxin biosynthesis. Its function is as follows. Short chain dehydrogenase; part of the gene cluster that mediates the biosynthesis of the aspoquinolone mycotoxins. The role of asqE within the aspoquinolone pathway has still to be determined. The first step of the pathway is catalyzed by the nonribosomal peptide synthetase asqK that condenses anthranilic acid and O-methyl-L-tyrosine to produce 4'-methoxycyclopeptin. 4'-methoxycyclopeptin is then converted to 4'-methoxydehydrocyclopeptin by the ketoglutarate-dependent dioxygenase asqJ. AsqJ also converts its first product 4'-methoxydehydrocyclopeptin to 4'-methoxycyclopenin. The following conversion of 4'-methoxycyclopenin into 4'-methoxyviridicatin is catalyzed by the cyclopenase asqI. 4'-methoxyviridicatin is the precursor of quinolone natural products, and is further converted to quinolinone B. The prenyltransferase asqH1 then catalyzes the canonical Friedel-Crafts alkylation of quinolinone B with dimethylallyl cation to yield dimethylallyl quinolone, which is subjected to FAD-dependent dehydrogenation by the FAD-linked oxidoreductase asqF to yield conjugated aryl diene. The delta(3') double bond then serves as the site of the second alkylation with DMAPP catalyzed by the prenyltransferase asqH2 to yield a carbenium ion intermediate, which can be attacked by H(2)O to yield a styrenyl quinolone containing a C3'-hydroxyprenyl chain. The FAD-dependent monooxygenase asqG performs epoxidation of the terminal C7'-C8' olefin. Finally, after dehydratation of the epoxide at C3 by asqC, the quinolone epoxide rearrangement protein asqO catalyzes an enzymatic 3-exo-tet cyclization to yield the cyclopropyl-THF ring system in aspoquinolone. This Emericella nidulans (strain FGSC A4 / ATCC 38163 / CBS 112.46 / NRRL 194 / M139) (Aspergillus nidulans) protein is Short chain dehydrogenase asqE.